We begin with the raw amino-acid sequence, 432 residues long: MPVLNLKSGFADADDLDTLMAGIGRRARAAGRAMALAPAQTKDLALRAIAEQIRASAATILRENARDVSAAQAAGQTKAIIDRLTLDEGRVAAIAEAVEKVASLPDPVGRQLAAFERPNGLLIERISVPLGVVGVIFESRPNVTADAGALCLKAGNAAILRAGSDSHRTATAIAAAMSEGLARTGLPADAIQLVPTRDRAAVGLMLTGLGGCVDVIVPRGGRSLVERVQAEAKVPVFAHLDGICHVYIAEGADLGMARTVLLNSKMRRTGICGAAETLLVDAAVAKTHLKPLVEALLESGCAVRGDAATQGVDPRVTPADEADWRTEYLDAIISAKVVDGLDAAIAHIEANGSHHTDAIITDDTEAAARFLNEVDSAIVTHNASTQFADGGEFGFGAEIGIATGRMHARGPVGVEQLTTFKYRVHGSGQTRP.

It belongs to the gamma-glutamyl phosphate reductase family.

It is found in the cytoplasm. The enzyme catalyses L-glutamate 5-semialdehyde + phosphate + NADP(+) = L-glutamyl 5-phosphate + NADPH + H(+). The protein operates within amino-acid biosynthesis; L-proline biosynthesis; L-glutamate 5-semialdehyde from L-glutamate: step 2/2. In terms of biological role, catalyzes the NADPH-dependent reduction of L-glutamate 5-phosphate into L-glutamate 5-semialdehyde and phosphate. The product spontaneously undergoes cyclization to form 1-pyrroline-5-carboxylate. This chain is Gamma-glutamyl phosphate reductase, found in Methylorubrum populi (strain ATCC BAA-705 / NCIMB 13946 / BJ001) (Methylobacterium populi).